Here is a 309-residue protein sequence, read N- to C-terminus: UDP-N-acetylenolpyruvoylglucosamine reductase (309 aa).

The region spanning 34–221 (RVGGPAQVLF…TAAREAAQPI (188 aa)) is the FAD-binding PCMH-type domain. R179 is an active-site residue. S228 acts as the Proton donor in catalysis. E298 is an active-site residue.

This sequence belongs to the MurB family. It depends on FAD as a cofactor.

The protein localises to the cytoplasm. The catalysed reaction is UDP-N-acetyl-alpha-D-muramate + NADP(+) = UDP-N-acetyl-3-O-(1-carboxyvinyl)-alpha-D-glucosamine + NADPH + H(+). It participates in cell wall biogenesis; peptidoglycan biosynthesis. Cell wall formation. In Methylorubrum populi (strain ATCC BAA-705 / NCIMB 13946 / BJ001) (Methylobacterium populi), this protein is UDP-N-acetylenolpyruvoylglucosamine reductase.